We begin with the raw amino-acid sequence, 383 residues long: MSELEFVTKHRRHLHQHPELSLHEFETTKYITQFLEELGVSYERPLETGAIAYLNGNSDHTIAFRADIDALPIFEENDVDYRSQTDNVMHACGHDGHTTALMLFVKRCKEMFDKGTLPHNVVFIFQPAEETGGGANRLIKAGAFNNYPIEAVFGIHVNPFADEGQVVIRDEEITASATEYRFFLKGLSSHVADKEQGHSCGEALLHVLNQVGQIQQYHLNGLKRNIVHMGHFEAGEAINTVASHGYLEGTIRTYDPNDLNVVKTQMHKIAESVSLLFNVDCEVKFEEGYPPTMNSPKLRASVEQAINAANLEVIDKPLPFLFGEDFSFYGQQLAPAYFAFVGTRNEDKGFVTGLHTSHLNFDEKVLIYVANYYEQLLMHYGEE.

This sequence belongs to the peptidase M20 family.

This is an uncharacterized protein from Staphylococcus haemolyticus (strain JCSC1435).